A 68-amino-acid polypeptide reads, in one-letter code: Protein P34 (68 aa).

A run of 2 helical transmembrane segments spans residues 4–24 and 41–61; these read FVGPIVTVLTAIIGVAILAVL and GFSSMLGTALSPVTGGTGFAM.

It is found in the virion membrane. The polypeptide is Protein P34 (XXXIV) (Acinetobacter calcoaceticus (Arthrobacter siderocapsulatus)).